Here is a 200-residue protein sequence, read N- to C-terminus: Imidazoleglycerol-phosphate dehydratase (200 aa).

This sequence belongs to the imidazoleglycerol-phosphate dehydratase family.

It localises to the cytoplasm. It carries out the reaction D-erythro-1-(imidazol-4-yl)glycerol 3-phosphate = 3-(imidazol-4-yl)-2-oxopropyl phosphate + H2O. It functions in the pathway amino-acid biosynthesis; L-histidine biosynthesis; L-histidine from 5-phospho-alpha-D-ribose 1-diphosphate: step 6/9. The sequence is that of Imidazoleglycerol-phosphate dehydratase from Leifsonia xyli subsp. xyli (strain CTCB07).